The following is a 240-amino-acid chain: UDP-2,3-diacylglucosamine hydrolase (240 aa).

Positions 8, 10, 41, 79, and 114 each coordinate Mn(2+). Position 79-80 (79-80 (NR)) interacts with substrate. Residues D122, S160, N164, K167, and H195 each contribute to the substrate site. Residues H195 and H197 each contribute to the Mn(2+) site.

The protein belongs to the LpxH family. Mn(2+) serves as cofactor.

The protein localises to the cell inner membrane. It carries out the reaction UDP-2-N,3-O-bis[(3R)-3-hydroxytetradecanoyl]-alpha-D-glucosamine + H2O = 2-N,3-O-bis[(3R)-3-hydroxytetradecanoyl]-alpha-D-glucosaminyl 1-phosphate + UMP + 2 H(+). It participates in glycolipid biosynthesis; lipid IV(A) biosynthesis; lipid IV(A) from (3R)-3-hydroxytetradecanoyl-[acyl-carrier-protein] and UDP-N-acetyl-alpha-D-glucosamine: step 4/6. In terms of biological role, hydrolyzes the pyrophosphate bond of UDP-2,3-diacylglucosamine to yield 2,3-diacylglucosamine 1-phosphate (lipid X) and UMP by catalyzing the attack of water at the alpha-P atom. Involved in the biosynthesis of lipid A, a phosphorylated glycolipid that anchors the lipopolysaccharide to the outer membrane of the cell. The protein is UDP-2,3-diacylglucosamine hydrolase of Shigella boydii serotype 18 (strain CDC 3083-94 / BS512).